The following is a 190-amino-acid chain: Probable RNA-binding protein 18 (190 aa).

Positions 25–106 (HRLWIGNVDP…KKLVVRWAHA (82 aa)) constitute an RRM domain.

This is Probable RNA-binding protein 18 (rbm18) from Xenopus laevis (African clawed frog).